A 735-amino-acid polypeptide reads, in one-letter code: uncharacterized protein (735 aa).

The region spanning 25–175 (DLSCLSPDLL…CIAAVLAGLL (151 aa)) is the GAF domain. The 71-residue stretch at 185–255 (SEAARRAMLD…RQGFMRHLAT (71 aa)) folds into the PAS domain. In terms of domain architecture, PAC spans 263 to 313 (RLVEVEALRADGSVFPAELTVNEHRAGGRRLFSAFVRDISDRITSRRALER). The region spanning 342–464 (GAVVLMLRDL…DGHLLHFAEH (123 aa)) is the GGDEF domain. One can recognise an EAL domain in the interval 472-732 (RLELEMALRD…VAGTLPETLA (261 aa)).

This is an uncharacterized protein from Azorhizobium caulinodans (strain ATCC 43989 / DSM 5975 / JCM 20966 / LMG 6465 / NBRC 14845 / NCIMB 13405 / ORS 571).